The following is a 338-amino-acid chain: Glycerol-3-phosphate dehydrogenase [NAD(P)+] (338 aa).

Trp11, Arg30, and Lys109 together coordinate NADPH. Sn-glycerol 3-phosphate is bound by residues Lys109, Gly143, and Ser145. Position 147 (Ala147) interacts with NADPH. Residues Lys198, Asp251, Ser261, Arg262, and Asn263 each contribute to the sn-glycerol 3-phosphate site. Catalysis depends on Lys198, which acts as the Proton acceptor. Arg262 contributes to the NADPH binding site. NADPH-binding residues include Val286 and Glu288.

It belongs to the NAD-dependent glycerol-3-phosphate dehydrogenase family.

The protein localises to the cytoplasm. It carries out the reaction sn-glycerol 3-phosphate + NAD(+) = dihydroxyacetone phosphate + NADH + H(+). The enzyme catalyses sn-glycerol 3-phosphate + NADP(+) = dihydroxyacetone phosphate + NADPH + H(+). It participates in membrane lipid metabolism; glycerophospholipid metabolism. Catalyzes the reduction of the glycolytic intermediate dihydroxyacetone phosphate (DHAP) to sn-glycerol 3-phosphate (G3P), the key precursor for phospholipid synthesis. The chain is Glycerol-3-phosphate dehydrogenase [NAD(P)+] from Cupriavidus necator (strain ATCC 17699 / DSM 428 / KCTC 22496 / NCIMB 10442 / H16 / Stanier 337) (Ralstonia eutropha).